Here is a 283-residue protein sequence, read N- to C-terminus: Probable endonuclease 4 (283 aa).

His69, His113, Glu148, Asp182, His185, His217, Asp230, His232, and Glu262 together coordinate Zn(2+).

It belongs to the AP endonuclease 2 family. Requires Zn(2+) as cofactor.

It carries out the reaction Endonucleolytic cleavage to 5'-phosphooligonucleotide end-products.. Functionally, endonuclease IV plays a role in DNA repair. It cleaves phosphodiester bonds at apurinic or apyrimidinic (AP) sites, generating a 3'-hydroxyl group and a 5'-terminal sugar phosphate. The protein is Probable endonuclease 4 of Bifidobacterium longum (strain NCC 2705).